A 74-amino-acid chain; its full sequence is uncharacterized protein (74 aa).

Residues 7 to 26 form a helical membrane-spanning segment; that stretch reads IHLYVMASAMSSSPIFFFFQ.

It is found in the membrane. This is an uncharacterized protein from Homo sapiens (Human).